The sequence spans 56 residues: uncharacterized protein (56 aa).

This is an uncharacterized protein from Lepidoptera (butterflies and moths).